Consider the following 559-residue polypeptide: MAAAKKAVLGPLVGAVDQGTSSTRFLVFNSKTAELLSHHQVEIKQEFPREGWVEQDPKEILQSVYECIEKTCEKLGQLNIDISNIKAIGVSNQRETTVVWDKLTGEPLYNAVVWLDLRTQSTVEKLSKRIPGNNNFVKSKTGLPLSTYFSAVKLRWLLDNVKKVQEAVEENRALFGTIDSWLIWSLTGGINGGVHCTDVTNASRTMLFNIHSLEWDKELCEFFGIPMEILPNVRSSSEIYGLMKISHSLKAGALEGVPISGCLGDQSAALVGQMCFQDGQAKNTYGTGCFLLCNTGHKCVFSEHGLLTTVAYKLGRDKPVYYALEGSVAIAGAVIRWLRDNLGIIKSSEEIEKLAKEVGTSYGCYFVPAFSGLYAPYWEPSARGIICGLTQFTNKCHIAFAALEAVCFQTREILDAMNRDCGIPLSHLQVDGGMTSNKILMQLQADILYIPVVKPSMPETTALGAAMAAGAAEGVGVWSLEPEDLSAVTMERFEPQINAEESEIRYSTWKKAVMKSIGWVTTQSPESGDPSIFCSLPLGFFIVSSMVMLIGARYISGIP.

Threonine 20 contributes to the ADP binding site. Residues threonine 20, serine 21, and serine 22 each contribute to the ATP site. Threonine 20 is a sn-glycerol 3-phosphate binding site. Arginine 24 lines the ADP pocket. Sn-glycerol 3-phosphate is bound by residues arginine 94, glutamate 95, and tyrosine 148. Residues arginine 94, glutamate 95, and tyrosine 148 each contribute to the glycerol site. Glycine 252 is a binding site for beta-D-fructose 1,6-bisphosphate. Aspartate 265 serves as a coordination point for sn-glycerol 3-phosphate. The glycerol site is built by aspartate 265 and glutamine 266. Residues threonine 287, glycine 332, glycine 433, and asparagine 437 each coordinate ADP. ATP-binding residues include threonine 287, glycine 332, and glycine 433. Zn(2+) is bound at residue glutamate 501. A helical transmembrane segment spans residues 532 to 552; that stretch reads IFCSLPLGFFIVSSMVMLIGA.

It belongs to the FGGY kinase family.

It localises to the mitochondrion outer membrane. It is found in the nucleus. The protein resides in the cytoplasm. Its subcellular location is the cytosol. The catalysed reaction is glycerol + ATP = sn-glycerol 3-phosphate + ADP + H(+). Its pathway is polyol metabolism; glycerol degradation via glycerol kinase pathway; sn-glycerol 3-phosphate from glycerol: step 1/1. Its function is as follows. Kinase that plays a key role in glycerol metabolism, catalyzing its phosphorylation to produce sn-glycerol 3-phosphate. Sn-glycerol 3-phosphate is a crucial intermediate in various metabolic pathways, such as the synthesis of glycerolipids and triglycerides, glycogenesis, glycolysis and gluconeogenesis. This is Glycerol kinase from Rattus norvegicus (Rat).